Consider the following 402-residue polypeptide: MRLNYLPSEFQKALPILKKIKKAGYEAYFVGGSVRDVLLDRPIHDVDIATSSYPEETKQIFKRTVDVGIEHGTVLVLEKGGEYEITTFRTEEVYVDYRRPSQVNFVRSLEEDLKRRDFTVNAFALNEDGEVIDLFHGLDDLDNHLLRAVGLASERFNEDALRIMRGLRFSASLNFDIETTTFEAMKKHASLLEKISVERSFIEFDKLLLAPYWRKGMLALIDSHAFNYLPCLKNRELQLSAFLSQLDKDFLFETSEQAWASLILSMEVEHTKTFLKKWKTSTHFQKDVEHIVDVYRIREQMGLTKEHLYRYGKTIIKQAEGIRKARGLMVDFEKIEQLDSELAIHDRHEIVVNGGTLIKKLGIKPGPQMGDIISQIELAIVLGQLINEEEAILHFVKQYLMD.

ATP is bound by residues Gly-32 and Arg-35. CTP contacts are provided by Gly-32 and Arg-35. Residues Asp-45 and Asp-47 each coordinate Mg(2+). Arg-116, Asp-159, Arg-162, Arg-165, and Arg-168 together coordinate ATP. Residues Arg-116, Asp-159, Arg-162, Arg-165, and Arg-168 each contribute to the CTP site.

It belongs to the tRNA nucleotidyltransferase/poly(A) polymerase family. Bacterial CCA-adding enzyme type 3 subfamily. In terms of assembly, homodimer. The cofactor is Mg(2+).

The enzyme catalyses a tRNA precursor + 2 CTP + ATP = a tRNA with a 3' CCA end + 3 diphosphate. It catalyses the reaction a tRNA with a 3' CCA end + 2 CTP + ATP = a tRNA with a 3' CCACCA end + 3 diphosphate. Catalyzes the addition and repair of the essential 3'-terminal CCA sequence in tRNAs without using a nucleic acid template. Adds these three nucleotides in the order of C, C, and A to the tRNA nucleotide-73, using CTP and ATP as substrates and producing inorganic pyrophosphate. tRNA 3'-terminal CCA addition is required both for tRNA processing and repair. Also involved in tRNA surveillance by mediating tandem CCA addition to generate a CCACCA at the 3' terminus of unstable tRNAs. While stable tRNAs receive only 3'-terminal CCA, unstable tRNAs are marked with CCACCA and rapidly degraded. The polypeptide is CCA-adding enzyme (Streptococcus agalactiae serotype III (strain NEM316)).